Consider the following 905-residue polypeptide: Dopamine D2-like receptor (905 aa).

Positions 1–23 (MLSPFDWRRGISSSGTGGTMAAQ) are disordered. The Extracellular segment spans residues 1–377 (MLSPFDWRRG…GELRVVDHNY (377 aa)). N-linked (GlcNAc...) asparagine glycans are attached at residues Asn88, Asn146, Asn156, Asn166, Asn174, Asn257, Asn314, and Asn343. Residues 378 to 398 (WALILILFPILTLFGNILVIL) traverse the membrane as a helical segment. Topologically, residues 399 to 416 (SVCRERSLQTVTNYFIVS) are cytoplasmic. A helical membrane pass occupies residues 417–437 (LAIADLLVAVVVMPFAVYFLV). The Extracellular segment spans residues 438-450 (NGAWALPDVVCDF). Cys448 and Cys525 are disulfide-bonded. Residues 451-471 (YIAMDVICSTSSIFNLVAISI) traverse the membrane as a helical segment. Topologically, residues 472–493 (DRYIAVTQPIKYAKHKNSRRVC) are cytoplasmic. Residues 494–514 (LTILLVWAISAAIGSPIVLGL) form a helical membrane-spanning segment. The Extracellular segment spans residues 515 to 531 (NNTPNREPDVCAFYNAD). The chain crosses the membrane as a helical span at residues 532–552 (FILYSSLSSFYIPCIIMVFLY). The Cytoplasmic segment spans residues 553–830 (WNIFKALRSR…AKKERKATKT (278 aa)). Disordered regions lie at residues 600–631 (SRHA…ISPD), 702–753 (ATSA…SVGV), and 780–799 (DSTL…KNSQ). Over residues 702–722 (ATSAAPRSSGSPPDSPLPSGA) the composition is skewed to low complexity. Residues 723–734 (TLQRSSVSSQRR) are compositionally biased toward polar residues. Positions 735-746 (PTGDDSPKRGEP) are enriched in basic and acidic residues. A helical membrane pass occupies residues 831–851 (LAIVLGVFLFCWLPFFSCNIM). The Extracellular segment spans residues 852 to 869 (DAMCAKFKKDCRPGLTAY). The chain crosses the membrane as a helical span at residues 870-890 (MMTTWLGYINSFVNPVIYTIF). At 891–905 (NPEFRKAFKKIMHMG) the chain is on the cytoplasmic side.

This sequence belongs to the G-protein coupled receptor 1 family. Highest expression is in adult heads.

The protein localises to the cell membrane. Receptor for dopamine. The activity of this receptor is mediated by G proteins which inhibit adenylyl cyclase. This chain is Dopamine D2-like receptor, found in Drosophila melanogaster (Fruit fly).